Here is a 157-residue protein sequence, read N- to C-terminus: Vitamin K-dependent protein C (157 aa).

The Peptidase S1 domain occupies 1-157; the sequence is EKWELDLDIK…GCGRLHNYGV (157 aa). A glycan (N-linked (GlcNAc...) asparagine) is linked at Asn-17. The active-site Charge relay system is Asp-26. The N-linked (GlcNAc...) asparagine glycan is linked to Asn-78. Disulfide bonds link Cys-96–Cys-110 and Cys-121–Cys-149. Ser-125 functions as the Charge relay system in the catalytic mechanism.

Belongs to the peptidase S1 family. As to expression, plasma; synthesized in the liver.

The protein localises to the secreted. The protein resides in the golgi apparatus. It localises to the endoplasmic reticulum. It catalyses the reaction Degradation of blood coagulation factors Va and VIIIa.. Its function is as follows. Protein C is a vitamin K-dependent serine protease that regulates blood coagulation by inactivating factors Va and VIIIa in the presence of calcium ions and phospholipids. Exerts a protective effect on the endothelial cell barrier function. This is Vitamin K-dependent protein C (PROC) from Felis catus (Cat).